The chain runs to 151 residues: Arginine repressor (151 aa).

It belongs to the ArgR family.

The protein localises to the cytoplasm. It functions in the pathway amino-acid biosynthesis; L-arginine biosynthesis [regulation]. Its function is as follows. Regulates arginine biosynthesis genes. This is Arginine repressor from Heliobacterium modesticaldum (strain ATCC 51547 / Ice1).